The following is an 876-amino-acid chain: DNA gyrase subunit A (876 aa).

The Topo IIA-type catalytic domain occupies 34–532 (LPDVRDGLKP…NSVDINIEDL (499 aa)). Tyr-122 acts as the O-(5'-phospho-DNA)-tyrosine intermediate in catalysis. Positions 559 to 565 (QRRGGKG) match the GyrA-box motif. The interval 844 to 876 (DEELDAIDGSAAEGDEDIAPEADTDDDIAEDEE) is disordered. Residues 856–876 (EGDEDIAPEADTDDDIAEDEE) are compositionally biased toward acidic residues.

This sequence belongs to the type II topoisomerase GyrA/ParC subunit family. As to quaternary structure, heterotetramer, composed of two GyrA and two GyrB chains. In the heterotetramer, GyrA contains the active site tyrosine that forms a transient covalent intermediate with DNA, while GyrB binds cofactors and catalyzes ATP hydrolysis.

The protein localises to the cytoplasm. It catalyses the reaction ATP-dependent breakage, passage and rejoining of double-stranded DNA.. Functionally, a type II topoisomerase that negatively supercoils closed circular double-stranded (ds) DNA in an ATP-dependent manner to modulate DNA topology and maintain chromosomes in an underwound state. Negative supercoiling favors strand separation, and DNA replication, transcription, recombination and repair, all of which involve strand separation. Also able to catalyze the interconversion of other topological isomers of dsDNA rings, including catenanes and knotted rings. Type II topoisomerases break and join 2 DNA strands simultaneously in an ATP-dependent manner. The chain is DNA gyrase subunit A from Klebsiella oxytoca.